The sequence spans 350 residues: Protein-glutamate methylesterase/protein-glutamine glutaminase (350 aa).

The Response regulatory domain occupies Arg-5–Met-122. At Asp-56 the chain carries 4-aspartylphosphate. The CheB-type methylesterase domain occupies Leu-152–Met-338. Residues Ser-164, His-190, and Asp-286 contribute to the active site.

It belongs to the CheB family. Phosphorylated by CheA. Phosphorylation of the N-terminal regulatory domain activates the methylesterase activity.

Its subcellular location is the cytoplasm. The enzyme catalyses [protein]-L-glutamate 5-O-methyl ester + H2O = L-glutamyl-[protein] + methanol + H(+). It catalyses the reaction L-glutaminyl-[protein] + H2O = L-glutamyl-[protein] + NH4(+). Its function is as follows. Involved in chemotaxis. Part of a chemotaxis signal transduction system that modulates chemotaxis in response to various stimuli. Catalyzes the demethylation of specific methylglutamate residues introduced into the chemoreceptors (methyl-accepting chemotaxis proteins or MCP) by CheR. Also mediates the irreversible deamidation of specific glutamine residues to glutamic acid. The sequence is that of Protein-glutamate methylesterase/protein-glutamine glutaminase from Enterobacter cloacae.